A 340-amino-acid polypeptide reads, in one-letter code: Dihydroorotate dehydrogenase (quinone) (340 aa).

Residues 61–65 (AGLDK) and Thr85 each bind FMN. Lys65 contributes to the substrate binding site. 110 to 114 (NRMGF) contributes to the substrate binding site. Positions 138 and 171 each coordinate FMN. Residue Asn171 participates in substrate binding. Ser174 acts as the Nucleophile in catalysis. Asn176 serves as a coordination point for substrate. The FMN site is built by Lys216 and Thr244. 245 to 246 (NT) is a binding site for substrate. Residues Gly267, Gly296, and 317–318 (YS) each bind FMN.

This sequence belongs to the dihydroorotate dehydrogenase family. Type 2 subfamily. As to quaternary structure, monomer. It depends on FMN as a cofactor.

Its subcellular location is the cell membrane. It carries out the reaction (S)-dihydroorotate + a quinone = orotate + a quinol. It participates in pyrimidine metabolism; UMP biosynthesis via de novo pathway; orotate from (S)-dihydroorotate (quinone route): step 1/1. Functionally, catalyzes the conversion of dihydroorotate to orotate with quinone as electron acceptor. This is Dihydroorotate dehydrogenase (quinone) from Ectopseudomonas mendocina (strain ymp) (Pseudomonas mendocina).